A 402-amino-acid polypeptide reads, in one-letter code: Type II NADH:quinone oxidoreductase (402 aa).

FAD-binding positions include 12-16 (GAGYA), 39-40 (NK), and Val83. Glu172 is an active-site residue. FAD contacts are provided by residues Asp302, 319–320 (AQ), and Lys379.

This sequence belongs to the NADH dehydrogenase family. It depends on FAD as a cofactor.

It is found in the cell membrane. The enzyme catalyses a quinone + NADH + H(+) = a quinol + NAD(+). In terms of biological role, alternative, nonproton pumping NADH:quinone oxidoreductase that delivers electrons to the respiratory chain by oxidation of NADH and reduction of quinones, and contributes to the regeneration of NAD(+). The protein is Type II NADH:quinone oxidoreductase of Staphylococcus haemolyticus (strain JCSC1435).